Here is a 301-residue protein sequence, read N- to C-terminus: Probable enoyl-CoA hydratase 2, mitochondrial (301 aa).

The transit peptide at methionine 1 to threonine 32 directs the protein to the mitochondrion. Substrate contacts are provided by residues alanine 105–leucine 109 and glycine 152.

The protein belongs to the enoyl-CoA hydratase/isomerase family.

The protein resides in the mitochondrion. It carries out the reaction a (3S)-3-hydroxyacyl-CoA = a (2E)-enoyl-CoA + H2O. The enzyme catalyses a 4-saturated-(3S)-3-hydroxyacyl-CoA = a (3E)-enoyl-CoA + H2O. It functions in the pathway lipid metabolism; fatty acid beta-oxidation. Its function is as follows. Straight-chain enoyl-CoA thioesters from C4 up to at least C16 are processed, although with decreasing catalytic rate. In Arabidopsis thaliana (Mouse-ear cress), this protein is Probable enoyl-CoA hydratase 2, mitochondrial.